The following is a 37-amino-acid chain: Dolichyl-diphosphooligosaccharide--protein glycosyltransferase subunit 4A (37 aa).

The Lumenal segment spans residues 1–7; that stretch reads MIDDQDL. A helical transmembrane segment spans residues 8-28; it reads GFIANFLGIFIFALVIAYHYV. At 29-37 the chain is on the cytoplasmic side; it reads TADPKYEAT.

The protein belongs to the OST4 family. As to quaternary structure, component of the oligosaccharyltransferase (OST) complex.

The protein resides in the endoplasmic reticulum membrane. Functionally, subunit of the oligosaccharyl transferase (OST) complex that catalyzes the initial transfer of a defined glycan (Glc(3)Man(9)GlcNAc(2) in eukaryotes) from the lipid carrier dolichol-pyrophosphate to an asparagine residue within an Asn-X-Ser/Thr consensus motif in nascent polypeptide chains, the first step in protein N-glycosylation. N-glycosylation occurs cotranslationally and the complex associates with the Sec61 complex at the channel-forming translocon complex that mediates protein translocation across the endoplasmic reticulum (ER). All subunits are required for a maximal enzyme activity. This Arabidopsis thaliana (Mouse-ear cress) protein is Dolichyl-diphosphooligosaccharide--protein glycosyltransferase subunit 4A (OST4A).